We begin with the raw amino-acid sequence, 233 residues long: Small ribosomal subunit protein uS2 (233 aa).

Belongs to the universal ribosomal protein uS2 family.

This Clostridium perfringens (strain ATCC 13124 / DSM 756 / JCM 1290 / NCIMB 6125 / NCTC 8237 / Type A) protein is Small ribosomal subunit protein uS2.